Reading from the N-terminus, the 478-residue chain is PRAME family member 15 (478 aa).

The stretch at 99–126 (RWKLQVLDLQDVCENFWMVWSEAMAHGC) is one LRR 1; degenerate repeat. The stretch at 181-205 (HLCCKKLKILGMPFRNIRSILKMVN) is one LRR 2; degenerate repeat. The LRR 3; degenerate repeat unit spans residues 206–232 (LDCIQEVEVNCKWVLPILTQFTPYLGH). The stretch at 233–268 (MRNLQKLVLSHMDVSRYVSPEQKKEIVTQFTTQFLK) is one LRR 4; degenerate repeat. 5 LRR repeats span residues 269 to 294 (LRCL…LSCL), 295 to 326 (KTSL…SQLK), 327 to 347 (TLDL…QILL), 351 to 378 (AATL…ALSR), and 379 to 403 (CFEL…LLSH).

This sequence belongs to the PRAME family.

The polypeptide is PRAME family member 15 (Homo sapiens (Human)).